Consider the following 77-residue polypeptide: Immune protein Tsi2 (77 aa).

In terms of assembly, forms a heterotetramer with Tse2 consisting of two Tse2 dimers and two Tsi2 dimers. Formation of the complex inactivates Tse2 enzymatic activity.

Functionally, immunity protein that plays a role in preventing early activation of toxin Tse2. Binds to a large surface of Tse2 and thereby occludes the active site to specifically inhibits Tse2. The polypeptide is Immune protein Tsi2 (Pseudomonas aeruginosa (strain ATCC 15692 / DSM 22644 / CIP 104116 / JCM 14847 / LMG 12228 / 1C / PRS 101 / PAO1)).